A 65-amino-acid polypeptide reads, in one-letter code: U15-hexatoxin-Mg1a (65 aa).

Post-translationally, contains 4 disulfide bonds. Expressed by the venom gland.

It localises to the secreted. Intrathorax injection into crickets causes paralysis prolonged for more than 60 minutes, followed by recovery. The polypeptide is U15-hexatoxin-Mg1a (Macrothele gigas (Japanese funnel web spider)).